A 554-amino-acid chain; its full sequence is Phosphomethylpyrimidine synthase (554 aa).

Residues Asn-188, Met-217, Tyr-246, His-282, 302–304, 343–346, and Glu-382 contribute to the substrate site; these read SRG and DGLR. His-386 provides a ligand contact to Zn(2+). Tyr-409 lines the substrate pocket. His-450 is a Zn(2+) binding site. 3 residues coordinate [4Fe-4S] cluster: Cys-530, Cys-533, and Cys-538.

It belongs to the ThiC family. As to quaternary structure, homodimer. [4Fe-4S] cluster is required as a cofactor.

It catalyses the reaction 5-amino-1-(5-phospho-beta-D-ribosyl)imidazole + S-adenosyl-L-methionine = 4-amino-2-methyl-5-(phosphooxymethyl)pyrimidine + CO + 5'-deoxyadenosine + formate + L-methionine + 3 H(+). It participates in cofactor biosynthesis; thiamine diphosphate biosynthesis. Its function is as follows. Catalyzes the synthesis of the hydroxymethylpyrimidine phosphate (HMP-P) moiety of thiamine from aminoimidazole ribotide (AIR) in a radical S-adenosyl-L-methionine (SAM)-dependent reaction. The sequence is that of Phosphomethylpyrimidine synthase from Coxiella burnetii (strain RSA 493 / Nine Mile phase I).